A 203-amino-acid chain; its full sequence is Dual-action ribosomal maturation protein DarP (203 aa).

2 disordered regions span residues 1–31 (MTRK…SQLK) and 178–203 (NADG…DRDA). Over residues 21–31 (GYDRPSKSQLK) the composition is skewed to basic and acidic residues. Positions 188-203 (SEADDAQDDEDDDRDA) are enriched in acidic residues.

It belongs to the DarP family.

The protein resides in the cytoplasm. Member of a network of 50S ribosomal subunit biogenesis factors which assembles along the 30S-50S interface, preventing incorrect 23S rRNA structures from forming. Promotes peptidyl transferase center (PTC) maturation. This is Dual-action ribosomal maturation protein DarP from Paraburkholderia xenovorans (strain LB400).